The following is a 385-amino-acid chain: Cytochrome b (385 aa).

Residues 1-27 (MAFRKSNVYLSLVNSYIIDSPQPSSIN) are Mitochondrial matrix-facing. An a ubiquinone-binding site is contributed by Tyr-16. The helical transmembrane segment at 28 to 51 (YWWNMGSLLGLCLVIQIVTGIFMA) threads the bilayer. The Mitochondrial intermembrane segment spans residues 52–74 (MHYSSNIELAFSSVEHIMRDVHN). Residues 75–102 (GYILRYLHANGASFFFMVMFMHMAKGLY) traverse the membrane as a helical segment. His-82 and His-96 together coordinate heme b. Residues 103 to 110 (YGSYRSPR) lie on the Mitochondrial matrix side of the membrane. Residues 111-135 (VTLWNVGVIIFILTIATAFLGYCCV) form a helical membrane-spanning segment. Topologically, residues 136-172 (YGQMSHWGATVITNLFSAIPFVGNDIVSWLWGGFSVS) are mitochondrial intermembrane. A helical transmembrane segment spans residues 173–204 (NPTIQRFFALHYLVPFIIAAMVIMHLMALHIH). The heme b site is built by His-183 and His-197. An a ubiquinone-binding site is contributed by His-202. Over 205 to 223 (GSSNPLGITGNLDRIPMHS) the chain is Mitochondrial matrix. Residues 224 to 246 (YFIFKDLVTVFLFMLILALFVFY) traverse the membrane as a helical segment. Topologically, residues 247 to 287 (SPNTLGHPDNYIPGNPLVTPASIVPEWYLLPFYAILRSIPD) are mitochondrial intermembrane. Residues 288–308 (KLLGVITMFAAILVLLVLPFT) form a helical membrane-spanning segment. The Mitochondrial matrix portion of the chain corresponds to 309–319 (DRSVVRGNTFK). Residues 320–340 (VLSKFFFFIFVFNFVLLGQIG) form a helical membrane-spanning segment. At 341–347 (ACHVEVP) the chain is on the mitochondrial intermembrane side. The helical transmembrane segment at 348 to 364 (YVLMGQIATFIYFAYFL) threads the bilayer. The Mitochondrial matrix segment spans residues 365–385 (IIVPVISTIENVLFYIGRVNK).

The protein belongs to the cytochrome b family. As to quaternary structure, component of the ubiquinol-cytochrome c oxidoreductase (cytochrome b-c1 complex, complex III, CIII), a multisubunit enzyme composed of 10 subunits. The complex is composed of 3 respiratory subunits cytochrome b (COB), cytochrome c1 (CYT1) and Rieske protein (RIP1), 2 core protein subunits COR1 and QCR2, and 5 low-molecular weight protein subunits QCR6, QCR7, QCR8, QCR9 and QCR10. The complex exists as an obligatory dimer and forms supercomplexes (SCs) in the inner mitochondrial membrane with a monomer or a dimer of cytochrome c oxidase (complex IV, CIV), resulting in 2 different assemblies (supercomplexes III(2)IV and III(2)IV(2)). The cofactor is heme b.

Its subcellular location is the mitochondrion inner membrane. The catalysed reaction is a quinol + 2 Fe(III)-[cytochrome c](out) = a quinone + 2 Fe(II)-[cytochrome c](out) + 2 H(+)(out). Its function is as follows. Component of the ubiquinol-cytochrome c oxidoreductase, a multisubunit transmembrane complex that is part of the mitochondrial electron transport chain which drives oxidative phosphorylation. The respiratory chain contains 3 multisubunit complexes succinate dehydrogenase (complex II, CII), ubiquinol-cytochrome c oxidoreductase (cytochrome b-c1 complex, complex III, CIII) and cytochrome c oxidase (complex IV, CIV), that cooperate to transfer electrons derived from NADH and succinate to molecular oxygen, creating an electrochemical gradient over the inner membrane that drives transmembrane transport and the ATP synthase. The cytochrome b-c1 complex catalyzes electron transfer from ubiquinol to cytochrome c, linking this redox reaction to translocation of protons across the mitochondrial inner membrane, with protons being carried across the membrane as hydrogens on the quinol. In the process called Q cycle, 2 protons are consumed from the matrix, 4 protons are released into the intermembrane space and 2 electrons are passed to cytochrome c. Cytochrome b is a catalytic core subunit containing 2 b-type hemes BL and BH topographically segregated in the quinone reduction (Qi) and quinol oxidation (Q0) sites on opposite sides of the membrane. The chain is Cytochrome b (COB) from Saccharomyces cerevisiae (strain ATCC 204508 / S288c) (Baker's yeast).